Consider the following 494-residue polypeptide: Transcription factor SOX-9 (494 aa).

Disordered regions lie at residues 1 to 66 (MNLL…ESDE) and 159 to 275 (ERLR…FRDV). Residues 27 to 42 (SDDSAGSPCPSGSGSD) are compositionally biased toward low complexity. 2 stretches are compositionally biased toward basic and acidic residues: residues 56-66 (GDPDLKKESDE) and 159-174 (ERLRVQHKKDHPDYKY). Residues 63–103 (ESDEDKFPVCIREAVSQVLKGYDWTLVPMPVRVNGSSKNKP) are dimerization (DIM). Residues 63–103 (ESDEDKFPVCIREAVSQVLKGYDWTLVPMPVRVNGSSKNKP) form a PQA region. Position 64 is a phosphoserine (serine 64). Positions 105–173 (VKRPMNAFMV…QHKKDHPDYK (69 aa)) form a DNA-binding region, HMG box. Residue serine 181 is modified to Phosphoserine. Residues 211 to 222 (SPQSSSSISEVH) show a composition bias toward low complexity. Positions 224–309 (PGEHSGQSQG…LPPNGHPGVP (86 aa)) are transactivation domain (TAM). Short sequence motifs (9aaTAD) lie at residues 277–286 (IGELSSDVIS) and 292–300 (DVNEFDQYL). Residues 326 to 337 (SSASSPAGAGHA) are compositionally biased toward low complexity. The tract at residues 326 to 402 (SSASSPAGAG…PQQQQQQQQQ (77 aa)) is disordered. Residues 344-353 (PQPPQPPAQP) are compositionally biased toward pro residues. Residues 372–494 (RPHIKTEQLS…QPVYTQLTRP (123 aa)) are transactivation domain (TAC). Lysine 376 is covalently cross-linked (Glycyl lysine isopeptide (Lys-Gly) (interchain with G-Cter in SUMO)). Polar residues predominate over residues 378 to 387 (EQLSPSHYSE). Residues 388–402 (QQQHSPQQQQQQQQQ) are compositionally biased toward low complexity. The 9aaTAD 3 signature appears at 445 to 453 (GGLYSTFTY). A disordered region spans residues 462–494 (YTPIADTSGVPSIPQTHSPQHWEQPVYTQLTRP). Residues 470 to 494 (GVPSIPQTHSPQHWEQPVYTQLTRP) show a composition bias toward polar residues.

Interacts with SNAI2; triggers neural crest delamination in a phosphorylation dependent manner. Interacts with UBE2I. In terms of processing, phosphorylated at Ser-181 in the developing neural tube. Phosphorylation at either Ser-64 or Ser-181 is required for sumoylation, but phosphorylation is not dependent on sumoylation. Sumoylation is enhanced by PKA. Phosphorylation is required for interaction with SNAI2 to trigger neural crest delamination and for an efficient trunk neural crest delamination, whereas sumoylation plays a less significant role. Phosphorylation and sumoylation are induced by BMP signaling pathway. Sumoylated at Lys-376; phosphorylation at either Ser-64 or Ser-181 is required for sumoylation. Sumoylation is induced by BMP signaling pathway.

Its subcellular location is the nucleus. In terms of biological role, transcription factor that plays a key role in chondrocytes differentiation and skeletal development. Specifically binds the 5'-ACAAAG-3' DNA motif present in enhancers and super-enhancers and promotes expression of genes important for chondrogenesis, including COL2A1. Plays a central role in successive steps of chondrocyte differentiation. Absolutely required for precartilaginous condensation, the first step in chondrogenesis during which skeletal progenitors differentiate into prechondrocytes. Together with SOX5 and SOX6, required for overt chondrogenesis when condensed prechondrocytes differentiate into early stage chondrocytes, the second step in chondrogenesis. Later, required to direct hypertrophic maturation and block osteoblast differentiation of growth plate chondrocytes: maintains chondrocyte columnar proliferation, delays prehypertrophy and then prevents osteoblastic differentiation of chondrocytes. Also required for chondrocyte hypertrophy, both indirectly, by keeping the lineage fate of chondrocytes, and directly, by remaining present in upper hypertrophic cells. Low lipid levels are the main nutritional determinant for chondrogenic commitment of skeletal progenitor cells: when lipids levels are low, FOXO transcription factors promote expression of SOX9, which induces chondrogenic commitment and suppresses fatty acid oxidation. In addition to cartilage development, also acts as a regulator of proliferation and differentiation in epithelial stem/progenitor cells. In response to bone morphogenetic protein stimulus, phosphorylation is induced and then sumoylation, allowing cooperation with SNAI2 to trigger neural crest delamination. In Gallus gallus (Chicken), this protein is Transcription factor SOX-9.